The sequence spans 455 residues: Chromosomal replication initiator protein DnaA (455 aa).

The tract at residues 1-75 is domain I, interacts with DnaA modulators; the sequence is MDTNNNIEKE…EILSQNKVGM (75 aa). The domain II stretch occupies residues 75–106; the sequence is MHLAHSVDVRIEVAPKIQISTQSNINYKATKM. Residues 107 to 321 form a domain III, AAA+ region region; it reads SVKDSYTFEN…GAIIKISVNA (215 aa). ATP contacts are provided by Gly151, Gly153, Lys154, and Thr155. Residues 322-455 form a domain IV, binds dsDNA region; it reads NLMNASIDLN…DKKTAFNSSE (134 aa).

The protein belongs to the DnaA family. As to quaternary structure, oligomerizes as a right-handed, spiral filament on DNA at oriC.

It localises to the cytoplasm. In terms of biological role, plays an essential role in the initiation and regulation of chromosomal replication. ATP-DnaA binds to the origin of replication (oriC) to initiate formation of the DNA replication initiation complex once per cell cycle. Binds the DnaA box (a 9 base pair repeat at the origin) and separates the double-stranded (ds)DNA. Forms a right-handed helical filament on oriC DNA; dsDNA binds to the exterior of the filament while single-stranded (ss)DNA is stabiized in the filament's interior. The ATP-DnaA-oriC complex binds and stabilizes one strand of the AT-rich DNA unwinding element (DUE), permitting loading of DNA polymerase. After initiation quickly degrades to an ADP-DnaA complex that is not apt for DNA replication. Binds acidic phospholipids. This chain is Chromosomal replication initiator protein DnaA, found in Helicobacter pylori (strain HPAG1).